A 309-amino-acid chain; its full sequence is Probable MRF1 mitochondrial N(5)-glutamine methyltransferase mtq1 (309 aa).

S-adenosyl-L-methionine is bound by residues 124-128 (CTGSG), Asp148, and Asn200. 200–203 (NPPY) lines the substrate pocket.

It belongs to the protein N5-glutamine methyltransferase family.

It is found in the mitochondrion. It carries out the reaction L-glutaminyl-[peptide chain release factor] + S-adenosyl-L-methionine = N(5)-methyl-L-glutaminyl-[peptide chain release factor] + S-adenosyl-L-homocysteine + H(+). Its function is as follows. Methylates MRF1 on 'Gln-270' using S-adenosyl L-methionine as methyl donor. The sequence is that of Probable MRF1 mitochondrial N(5)-glutamine methyltransferase mtq1 (mtq1) from Schizosaccharomyces pombe (strain 972 / ATCC 24843) (Fission yeast).